Consider the following 325-residue polypeptide: Olfactory receptor 14L1 (325 aa).

Residues 1-43 (MAQFNKNQLIACRRNGTTTSDFNQTEVAEFFLMGFSNSWDIQI) lie on the Extracellular side of the membrane. A helical membrane pass occupies residues 44-64 (VHAALFFLVYLAAVIGNLLII). The Cytoplasmic segment spans residues 65–72 (ILTTLDVH). A helical transmembrane segment spans residues 73–93 (LQTPMYFFLRNLSFLDFCYIS). Residues 94–117 (VTIPKSIVSSLTHDTSISFFGCAL) lie on the Extracellular side of the membrane. The helical transmembrane segment at 118 to 138 (QAFFFMDLATTEVAILTVMSY) threads the bilayer. Residues 139-151 (DRYMAICRPLHYE) are Cytoplasmic-facing. Residues 152 to 172 (VIINQGVCLRMMAMSWLSGVI) form a helical membrane-spanning segment. The Extracellular portion of the chain corresponds to 173-214 (CGFMHVIATFSLPFCGRNRIRQFFCNIPQLLSLLDPKVITIE). The helical transmembrane segment at 215-235 (IGVMVFGTSLVIISFVVITLS) threads the bilayer. Topologically, residues 236-255 (YMYIFSVIMRIPSKEGRSKT) are cytoplasmic. The chain crosses the membrane as a helical span at residues 256–276 (FSTCIPHLVVVTLFMISGSIA). Residues 277-289 (YVKPISNSPPVLD) are Extracellular-facing. Residues 290 to 310 (VFLSAFYTVVPPTLNPVIYSL) traverse the membrane as a helical segment. Residues 311–325 (RNRDMKAALRRQCGP) lie on the Cytoplasmic side of the membrane.

It belongs to the G-protein coupled receptor 1 family.

The protein localises to the cell membrane. Functionally, odorant receptor. This chain is Olfactory receptor 14L1, found in Homo sapiens (Human).